The following is a 207-amino-acid chain: Holliday junction branch migration complex subunit RuvA (207 aa).

Residues 1-65 form a domain I region; it reads MYDYIRGVLT…ETEHVLYGFH (65 aa). The interval 66–144 is domain II; that stretch reads TRGERECFRM…DLLPLDAQIL (79 aa). Positions 145 to 155 are flexible linker; it reads ASWEPAKPSCM. The segment at 155–207 is domain III; that stretch reads MEEGIQALAALGYPKSSAERMIAEAMSELPDHASVAEILPIALKKNLQGLNKI.

It belongs to the RuvA family. Homotetramer. Forms an RuvA(8)-RuvB(12)-Holliday junction (HJ) complex. HJ DNA is sandwiched between 2 RuvA tetramers; dsDNA enters through RuvA and exits via RuvB. An RuvB hexamer assembles on each DNA strand where it exits the tetramer. Each RuvB hexamer is contacted by two RuvA subunits (via domain III) on 2 adjacent RuvB subunits; this complex drives branch migration. In the full resolvosome a probable DNA-RuvA(4)-RuvB(12)-RuvC(2) complex forms which resolves the HJ.

It is found in the cytoplasm. In terms of biological role, the RuvA-RuvB-RuvC complex processes Holliday junction (HJ) DNA during genetic recombination and DNA repair, while the RuvA-RuvB complex plays an important role in the rescue of blocked DNA replication forks via replication fork reversal (RFR). RuvA specifically binds to HJ cruciform DNA, conferring on it an open structure. The RuvB hexamer acts as an ATP-dependent pump, pulling dsDNA into and through the RuvAB complex. HJ branch migration allows RuvC to scan DNA until it finds its consensus sequence, where it cleaves and resolves the cruciform DNA. The chain is Holliday junction branch migration complex subunit RuvA from Chlamydia abortus (strain DSM 27085 / S26/3) (Chlamydophila abortus).